Reading from the N-terminus, the 471-residue chain is Probable pyruvate, phosphate dikinase regulatory protein, chloroplastic (471 aa).

The N-terminal 49 residues, 1–49, are a transit peptide targeting the chloroplast; the sequence is MSSSSSTSPRFGSMISAKLASPPPSLLLPPSPRLQGRRLTPPSCTPGTP. The segment at 1–133 is disordered; sequence MSSSSSTSPR…PHPSSDEAAS (133 aa). Residues 21 to 32 show a composition bias toward pro residues; the sequence is SPPPSLLLPPSP. The segment covering 71-88 has biased composition (polar residues); the sequence is GSATTPRSPAQLGSSQLH. Positions 89–99 are enriched in basic residues; that stretch reads RWSRARAHRSG. Positions 100–111 are enriched in basic and acidic residues; it reads RRLEWPTIRDRG. 171–178 contributes to the ADP binding site; that stretch reads HSVNAALG.

It belongs to the pyruvate, phosphate/water dikinase regulatory protein family. PDRP subfamily.

The protein localises to the plastid. It localises to the chloroplast. The enzyme catalyses N(tele)-phospho-L-histidyl/L-threonyl-[pyruvate, phosphate dikinase] + ADP = N(tele)-phospho-L-histidyl/O-phospho-L-threonyl-[pyruvate, phosphate dikinase] + AMP + H(+). It carries out the reaction N(tele)-phospho-L-histidyl/O-phospho-L-threonyl-[pyruvate, phosphate dikinase] + phosphate + H(+) = N(tele)-phospho-L-histidyl/L-threonyl-[pyruvate, phosphate dikinase] + diphosphate. With respect to regulation, regulated by light/dark exposure. Functionally, bifunctional serine/threonine kinase and phosphorylase involved in the dark/light-mediated regulation of PPDK by catalyzing its phosphorylation/dephosphorylation. Dark/light-induced changes in stromal concentrations of the competing ADP and Pi substrates govern the direction of the reaction. In the dark, phosphorylates the catalytic intermediate of PPDK (PPDK-HisP), inactivating it. Light exposure induces the phosphorolysis reaction that reactivates PPDK. The protein is Probable pyruvate, phosphate dikinase regulatory protein, chloroplastic (PDRP1) of Oryza sativa subsp. indica (Rice).